A 284-amino-acid chain; its full sequence is MKQKVVSIGDINVANDLPFVLFGGMNVLESRDLAMRICEHYVTVTQKLGIPYVFKASFDKANRSSIHSYRGPGLEEGMKIFQELKQTFGVKIITDVHEPSQAQPVADVVDVIQLPAFLARQTDLVEAMAKTGAVINVKKPQFVSPGQMGNIVDKFKEGGNEKVILCDRGANFGYDNLVVDMLGFSIMKKVSGNSPVIFDVTHALQCRDPFGAASGGRRAQVAELARAGMAVGLAGLFIEAHPDPEHAKCDGPSALPLAKLEPFLRQMKAIDDLVKGFEELDTSK.

The protein belongs to the KdsA family.

The protein localises to the cytoplasm. The enzyme catalyses D-arabinose 5-phosphate + phosphoenolpyruvate + H2O = 3-deoxy-alpha-D-manno-2-octulosonate-8-phosphate + phosphate. The protein operates within carbohydrate biosynthesis; 3-deoxy-D-manno-octulosonate biosynthesis; 3-deoxy-D-manno-octulosonate from D-ribulose 5-phosphate: step 2/3. Its pathway is bacterial outer membrane biogenesis; lipopolysaccharide biosynthesis. This chain is 2-dehydro-3-deoxyphosphooctonate aldolase, found in Escherichia coli O157:H7.